A 107-amino-acid chain; its full sequence is Replication initiation control protein YabA (107 aa).

The Zn(2+) site is built by histidine 80, cysteine 82, cysteine 97, and cysteine 100.

It belongs to the YabA family. As to quaternary structure, homotetramer. Interacts with both DnaA and DnaN, acting as a bridge between these two proteins. Zn(2+) is required as a cofactor.

The protein resides in the cytoplasm. It localises to the nucleoid. Functionally, involved in control of chromosome replication initiation. Inhibits the cooperative binding of DnaA to the oriC region, thus negatively regulating initiation of chromosome replication. Inhibits the ability of DnaA-ATP to form a helix on DNA; does not disassemble preformed DnaA-DNA helices. Decreases the residence time of DnaA on the chromosome at its binding sites (oriC, replication forks and promoter-binding sites). Tethers DnaA to the replication machinery via the DNA polymerase beta sliding clamp subunit (dnaN). Associates with oriC and other DnaA targets on the chromosome in a DnaA-dependent manner. This is Replication initiation control protein YabA from Streptococcus gordonii (strain Challis / ATCC 35105 / BCRC 15272 / CH1 / DL1 / V288).